A 491-amino-acid polypeptide reads, in one-letter code: Probable protein phosphatase 2C 52 (491 aa).

Residues 1-11 show a composition bias toward basic and acidic residues; the sequence is MVYDGAVKDQE. The segment at 1-211 is disordered; it reads MVYDGAVKDQ…REREKERERV (211 aa). The segment covering 12-54 has biased composition (low complexity); the sequence is SSANPASASAALSEASAAASEVTAAAAAGAGAGAAEEGAAVSG. Residues 66-78 show a composition bias toward basic residues; that stretch reads GVRHPLKHRRFRA. Over residues 95–105 the composition is skewed to acidic residues; sequence VADEEASEVEQ. Residues 187 to 211 show a composition bias toward basic and acidic residues; it reads VEEKKHKDQENKHKEREREKERERV. Residues 229–475 enclose the PPM-type phosphatase domain; that stretch reads SCGYSSFRGK…DNITCIVVKF (247 aa). 4 residues coordinate Mn(2+): aspartate 265, glycine 266, aspartate 427, and aspartate 466.

The protein belongs to the PP2C family. Requires Mg(2+) as cofactor. Mn(2+) is required as a cofactor.

It catalyses the reaction O-phospho-L-seryl-[protein] + H2O = L-seryl-[protein] + phosphate. The catalysed reaction is O-phospho-L-threonyl-[protein] + H2O = L-threonyl-[protein] + phosphate. This Oryza sativa subsp. japonica (Rice) protein is Probable protein phosphatase 2C 52.